We begin with the raw amino-acid sequence, 214 residues long: Thymidylate kinase (214 aa).

ATP is bound at residue 7 to 14 (GIDGAGKS).

The protein belongs to the thymidylate kinase family.

It catalyses the reaction dTMP + ATP = dTDP + ADP. Phosphorylation of dTMP to form dTDP in both de novo and salvage pathways of dTTP synthesis. In Chlorobium luteolum (strain DSM 273 / BCRC 81028 / 2530) (Pelodictyon luteolum), this protein is Thymidylate kinase.